A 324-amino-acid chain; its full sequence is 7,8-didemethyl-8-hydroxy-5-deazariboflavin synthase (324 aa).

The 236-residue stretch at 4–239 folds into the Radical SAM core domain; it reads VTYSKNVFIP…QEVAIQIPPN (236 aa). [4Fe-4S] cluster is bound by residues C18, C22, and C25.

This sequence belongs to the radical SAM superfamily. CofG family. As to quaternary structure, consists of two subunits, CofG and CofH. The cofactor is [4Fe-4S] cluster.

It catalyses the reaction 5-amino-5-(4-hydroxybenzyl)-6-(D-ribitylimino)-5,6-dihydrouracil + S-adenosyl-L-methionine = 7,8-didemethyl-8-hydroxy-5-deazariboflavin + 5'-deoxyadenosine + L-methionine + NH4(+) + H(+). It functions in the pathway cofactor biosynthesis; coenzyme F0 biosynthesis. Catalyzes the radical-mediated synthesis of 7,8-didemethyl-8-hydroxy-5-deazariboflavin from 5-amino-5-(4-hydroxybenzyl)-6-(D-ribitylimino)-5,6-dihydrouracil. This Archaeoglobus fulgidus (strain ATCC 49558 / DSM 4304 / JCM 9628 / NBRC 100126 / VC-16) protein is 7,8-didemethyl-8-hydroxy-5-deazariboflavin synthase.